We begin with the raw amino-acid sequence, 400 residues long: Arabinan endo-1,5-alpha-L-arabinosidase B (400 aa).

The N-terminal stretch at M1 to S16 is a signal peptide. N-linked (GlcNAc...) asparagine glycosylation is present at N24. D70 serves as the catalytic Proton acceptor. N184 is a glycosylation site (N-linked (GlcNAc...) asparagine). E277 acts as the Proton donor in catalysis. The N-linked (GlcNAc...) asparagine glycan is linked to N372.

The protein belongs to the glycosyl hydrolase 43 family.

Its subcellular location is the secreted. The catalysed reaction is Endohydrolysis of (1-&gt;5)-alpha-arabinofuranosidic linkages in (1-&gt;5)-arabinans.. It functions in the pathway glycan metabolism; L-arabinan degradation. Functionally, endo-1,5-alpha-L-arabinanase involved in degradation of pectin. Its preferred substrate is linear 1,5-alpha-L-arabinan. In Emericella nidulans (strain FGSC A4 / ATCC 38163 / CBS 112.46 / NRRL 194 / M139) (Aspergillus nidulans), this protein is Arabinan endo-1,5-alpha-L-arabinosidase B (abnB).